The sequence spans 50 residues: MSKLTKGRKIRLSKATAQNRRVPSWVMIKTKRAVVSHPKRRSWRRSSLKV.

Belongs to the eukaryotic ribosomal protein eL39 family.

In Methanosphaerula palustris (strain ATCC BAA-1556 / DSM 19958 / E1-9c), this protein is Large ribosomal subunit protein eL39.